We begin with the raw amino-acid sequence, 169 residues long: FAM231A/C-like protein LOC102723383 (169 aa).

The disordered stretch occupies residues 82–140; the sequence is LIRSGSSQNESQEDQGAGLISQAGLKADNRRESSTWANEVEDRRPQCTPALNLTPSHPH.

This sequence belongs to the FAM231 family.

This Homo sapiens (Human) protein is FAM231A/C-like protein LOC102723383.